A 318-amino-acid chain; its full sequence is O-glucosyltransferase LpsA (318 aa).

The protein belongs to the glycosyltransferase 90 family.

It functions in the pathway protein modification; protein glycosylation. Involved in lipopolysaccharide core biosynthesis. This Dichelobacter nodosus (Bacteroides nodosus) protein is O-glucosyltransferase LpsA (lpsA).